The following is a 158-amino-acid chain: Transcription elongation factor GreA (158 aa).

It belongs to the GreA/GreB family.

Its function is as follows. Necessary for efficient RNA polymerase transcription elongation past template-encoded arresting sites. The arresting sites in DNA have the property of trapping a certain fraction of elongating RNA polymerases that pass through, resulting in locked ternary complexes. Cleavage of the nascent transcript by cleavage factors such as GreA or GreB allows the resumption of elongation from the new 3'terminus. GreA releases sequences of 2 to 3 nucleotides. The protein is Transcription elongation factor GreA of Baumannia cicadellinicola subsp. Homalodisca coagulata.